A 691-amino-acid chain; its full sequence is MLTTTFARKREESVPLRKGIQRALLGLSCLVLSTTSFAAGGEWRTHGYDDAGTRYSPLAQITPDNAKELGLVWSYDLESSRGVEATPIVVDGVMYVTAPWSVVHALDVRSGKRLWTYDPEVPREKGKNACCDVVNRGVAVHEGKVFVGSLDGRLVAIDARTGKRVWERNTLIDDDKPYTITGAPRVIKGKVVIGNGGAEFGVRGYITAYDPTAASRPGVVPGPGDPSLPFEDASMEAAAKTWDPAGQVLGSGRRRHGVELDGLYRKAGFCCTSAPATPSPWSHRKRSPAGGDNLYTASIVALRPDTGEYVWHYQQTPADNWDYTSTQDLILADIELGGKPRKVILHAPKNGFFFVIDRTDGKFISAQNFVPVNWATGYDENGRPIENPEGAWPGHLSMRFPAPSARTNWHSMSYSPQTGLAYFPAQNIPLVLQEDKNWSYNQAQPGQAMAGIGWNLGMLVNPRPPASQPFGRLIAWDPVQQKEVWRKEHVSPWNGGTLVTAGNVVFQGTADARLLAFDARDGKELWSAPMGTGVIAAPVTYEVDGKQYVSIAVGWGGVYGNFTRASERRTPGTVYTFALGGKAEMPAFTEYQLNNLVSGVDYNPDDVAEGTGLYVTNCVFCHGVPGVDKGGGIPNLGYSTAETIAHLDQFVFKGPFMPRGMPDFTGKLTPEQVEKIKAFILGTADAVRPKK.

Positions 1-38 (MLTTTFARKREESVPLRKGIQRALLGLSCLVLSTTSFA) are cleaved as a signal peptide. Glu-84 is a pyrroloquinoline quinone binding site. Residues Cys-130 and Cys-131 are joined by a disulfide bond. Residues Arg-136, Thr-181, and 197–198 (GA) each bind pyrroloquinoline quinone. Ca(2+) contacts are provided by Glu-199 and Asp-322. The Proton acceptor role is filled by Asp-322. Residues Lys-349, 408–409 (NW), and Val-558 contribute to the pyrroloquinoline quinone site. The Cytochrome c domain maps to 605–684 (DDVAEGTGLY…KIKAFILGTA (80 aa)). Heme c-binding residues include Cys-618, Cys-621, His-622, and Met-661.

Belongs to the bacterial PQQ dehydrogenase family. In terms of assembly, monomer. The cofactor is pyrroloquinoline quinone. Ca(2+) is required as a cofactor. Requires heme c as cofactor.

The protein resides in the periplasm. The catalysed reaction is butan-1-ol + 2 Fe(III)-[cytochrome c] = butanal + 2 Fe(II)-[cytochrome c] + 2 H(+). With respect to regulation, dehydrogenase activity is increased by ammonium ions. In terms of biological role, involved in the metabolism of butane. Could be important in the detoxification of 1-butanol. Catalyzes the oxidation of 1-butanol to butyraldehyde. Also able to use 1-propanol, 2-pentanol, propionaldehyde and butyraldehyde as substrates. The sequence is that of 1-butanol dehydrogenase (cytochrome c) from Thauera butanivorans (strain ATCC 43655 / DSM 2080 / JCM 20651 / CCUG 51053 / NBRC 103042 / IAM 12574 / Bu B1211) (Pseudomonas butanovora).